Here is a 365-residue protein sequence, read N- to C-terminus: 3-amino-4-hydroxybenzoate 4-O-methyltransferase (365 aa).

A compositionally biased stretch (polar residues) spans 1–18 (MTVPENAQHTAPDQTQHT). The segment at 1 to 32 (MTVPENAQHTAPDQTQHTAPDRTRQAQQAAPD) is disordered. Residues aspartate 227, 253 to 255 (GDF), and arginine 270 each bind S-adenosyl-L-methionine. Histidine 273 acts as the Proton acceptor in catalysis.

The protein belongs to the class I-like SAM-binding methyltransferase superfamily. Cation-independent O-methyltransferase family.

It catalyses the reaction 3-amino-2,4-dihydroxybenzoate + S-adenosyl-L-methionine = 3-amino-2-hydroxy-4-methoxybenzoate + S-adenosyl-L-homocysteine + H(+). It participates in antibiotic biosynthesis. Part of a gene cluster involved in the biosynthesis of cremeomycin, a light-sensitive o-diazoquinone with antibacterial and antiproliferative effects. Catalyzes the methylation of the C4 hydroxyl group of 3-amino-2,4-dihydroxybenzoate (3,2,4-ADHBA) to form 3-amino-2-hydroxy-4-methoxybenzoate (3,2,4-AHMBA). In vitro, can also catalyze the methylation of 3-amino-4-hydroxybenzoate (3,4-AHBA). This Streptomyces cremeus protein is 3-amino-4-hydroxybenzoate 4-O-methyltransferase.